We begin with the raw amino-acid sequence, 145 residues long: Large ribosomal subunit protein uL13 (145 aa).

Belongs to the universal ribosomal protein uL13 family. Part of the 50S ribosomal subunit.

Functionally, this protein is one of the early assembly proteins of the 50S ribosomal subunit, although it is not seen to bind rRNA by itself. It is important during the early stages of 50S assembly. This Geobacillus thermodenitrificans (strain NG80-2) protein is Large ribosomal subunit protein uL13.